We begin with the raw amino-acid sequence, 149 residues long: D-aminoacyl-tRNA deacylase (149 aa).

Positions 137 to 138 (GP) match the Gly-cisPro motif, important for rejection of L-amino acids motif.

The protein belongs to the DTD family. Homodimer.

It localises to the cytoplasm. It carries out the reaction glycyl-tRNA(Ala) + H2O = tRNA(Ala) + glycine + H(+). It catalyses the reaction a D-aminoacyl-tRNA + H2O = a tRNA + a D-alpha-amino acid + H(+). Functionally, an aminoacyl-tRNA editing enzyme that deacylates mischarged D-aminoacyl-tRNAs. Also deacylates mischarged glycyl-tRNA(Ala), protecting cells against glycine mischarging by AlaRS. Acts via tRNA-based rather than protein-based catalysis; rejects L-amino acids rather than detecting D-amino acids in the active site. By recycling D-aminoacyl-tRNA to D-amino acids and free tRNA molecules, this enzyme counteracts the toxicity associated with the formation of D-aminoacyl-tRNA entities in vivo and helps enforce protein L-homochirality. The polypeptide is D-aminoacyl-tRNA deacylase (Desulforudis audaxviator (strain MP104C)).